A 570-amino-acid chain; its full sequence is Formate--tetrahydrofolate ligase (570 aa).

ATP is bound at residue 65-72 (TPYGEGKT).

This sequence belongs to the formate--tetrahydrofolate ligase family.

The enzyme catalyses (6S)-5,6,7,8-tetrahydrofolate + formate + ATP = (6R)-10-formyltetrahydrofolate + ADP + phosphate. Its pathway is one-carbon metabolism; tetrahydrofolate interconversion. This chain is Formate--tetrahydrofolate ligase, found in Shewanella piezotolerans (strain WP3 / JCM 13877).